Consider the following 188-residue polypeptide: Acireductone dioxygenase (188 aa).

Residues His-97, His-99, Glu-103, and His-141 each coordinate Fe(2+). His-97, His-99, Glu-103, and His-141 together coordinate Ni(2+).

The protein belongs to the acireductone dioxygenase (ARD) family. In terms of assembly, monomer. Requires Fe(2+) as cofactor. Ni(2+) serves as cofactor.

The catalysed reaction is 1,2-dihydroxy-5-(methylsulfanyl)pent-1-en-3-one + O2 = 3-(methylsulfanyl)propanoate + CO + formate + 2 H(+). It catalyses the reaction 1,2-dihydroxy-5-(methylsulfanyl)pent-1-en-3-one + O2 = 4-methylsulfanyl-2-oxobutanoate + formate + 2 H(+). It functions in the pathway amino-acid biosynthesis; L-methionine biosynthesis via salvage pathway; L-methionine from S-methyl-5-thio-alpha-D-ribose 1-phosphate: step 5/6. Catalyzes 2 different reactions between oxygen and the acireductone 1,2-dihydroxy-3-keto-5-methylthiopentene (DHK-MTPene) depending upon the metal bound in the active site. Fe-containing acireductone dioxygenase (Fe-ARD) produces formate and 2-keto-4-methylthiobutyrate (KMTB), the alpha-ketoacid precursor of methionine in the methionine recycle pathway. Ni-containing acireductone dioxygenase (Ni-ARD) produces methylthiopropionate, carbon monoxide and formate, and does not lie on the methionine recycle pathway. The chain is Acireductone dioxygenase from Xanthomonas euvesicatoria pv. vesicatoria (strain 85-10) (Xanthomonas campestris pv. vesicatoria).